The primary structure comprises 149 residues: Calmodulin (149 aa).

A2 is subject to N-acetylalanine. 4 EF-hand domains span residues 8 to 43 (EQIAEFKEAFSLFDKDGDGCITTKELGTVMRSLGQN), 44 to 79 (PTEAELQDMISEVDADQNGTIDFPEFLNLMARKMKD), 81 to 116 (DSEEELKEAFKVFDKDQNGFISAAELRHVMTNLGEK), and 117 to 149 (LTDEEVDEMIREADIDGDGQVNYEEFVRMMLAK). Residues D21, D23, D25, C27, E32, D57, D59, N61, T63, E68, D94, D96, N98, and E105 each contribute to the Ca(2+) site. K116 bears the N6,N6,N6-trimethyllysine mark. D130, D132, D134, Q136, and E141 together coordinate Ca(2+).

Belongs to the calmodulin family.

Calmodulin mediates the control of a large number of enzymes, ion channels and other proteins by Ca(2+). Among the enzymes to be stimulated by the calmodulin-Ca(2+) complex are a number of protein kinases and phosphatases. The protein is Calmodulin (CALM1) of Solanum lycopersicum (Tomato).